A 464-amino-acid polypeptide reads, in one-letter code: Argininosuccinate lyase (464 aa).

This sequence belongs to the lyase 1 family. Argininosuccinate lyase subfamily.

It is found in the cytoplasm. It carries out the reaction 2-(N(omega)-L-arginino)succinate = fumarate + L-arginine. It functions in the pathway amino-acid biosynthesis; L-arginine biosynthesis; L-arginine from L-ornithine and carbamoyl phosphate: step 3/3. The polypeptide is Argininosuccinate lyase (Frankia casuarinae (strain DSM 45818 / CECT 9043 / HFP020203 / CcI3)).